The following is a 364-amino-acid chain: Methylthioribose-1-phosphate isomerase (364 aa).

Asp-254 serves as the catalytic Proton donor.

This sequence belongs to the eIF-2B alpha/beta/delta subunits family. MtnA subfamily.

Its subcellular location is the cytoplasm. It is found in the nucleus. The catalysed reaction is 5-(methylsulfanyl)-alpha-D-ribose 1-phosphate = 5-(methylsulfanyl)-D-ribulose 1-phosphate. It functions in the pathway amino-acid biosynthesis; L-methionine biosynthesis via salvage pathway; L-methionine from S-methyl-5-thio-alpha-D-ribose 1-phosphate: step 1/6. In terms of biological role, catalyzes the interconversion of methylthioribose-1-phosphate (MTR-1-P) into methylthioribulose-1-phosphate (MTRu-1-P). The chain is Methylthioribose-1-phosphate isomerase from Drosophila yakuba (Fruit fly).